Here is a 382-residue protein sequence, read N- to C-terminus: Probable trehalose-phosphate phosphatase 2 (382 aa).

It belongs to the trehalose phosphatase family. The cofactor is a divalent metal cation. As to expression, expressed in roots and shoots.

It carries out the reaction alpha,alpha-trehalose 6-phosphate + H2O = alpha,alpha-trehalose + phosphate. The protein operates within glycan biosynthesis; trehalose biosynthesis. Its function is as follows. Removes the phosphate from trehalose 6-phosphate to produce free trehalose. Trehalose accumulation in plant may improve abiotic stress tolerance. This Oryza sativa subsp. japonica (Rice) protein is Probable trehalose-phosphate phosphatase 2 (TPP2).